Here is a 299-residue protein sequence, read N- to C-terminus: Acetylglutamate kinase (299 aa).

Residues 70 to 71 (GG), Arg-92, and Asn-186 each bind substrate.

The protein belongs to the acetylglutamate kinase family. ArgB subfamily.

The protein localises to the cytoplasm. The catalysed reaction is N-acetyl-L-glutamate + ATP = N-acetyl-L-glutamyl 5-phosphate + ADP. Its pathway is amino-acid biosynthesis; L-arginine biosynthesis; N(2)-acetyl-L-ornithine from L-glutamate: step 2/4. In terms of biological role, catalyzes the ATP-dependent phosphorylation of N-acetyl-L-glutamate. This is Acetylglutamate kinase from Thermoanaerobacter sp. (strain X514).